The chain runs to 335 residues: Protein-arginine kinase (335 aa).

Residues 21–244 (VIISSRIRLA…NQIINEEKQI (224 aa)) enclose the Phosphagen kinase C-terminal domain. ATP is bound by residues 24-28 (SSRIR), H82, R115, 166-170 (RASVM), and 197-202 (RGIYGE).

It belongs to the ATP:guanido phosphotransferase family.

The catalysed reaction is L-arginyl-[protein] + ATP = N(omega)-phospho-L-arginyl-[protein] + ADP + H(+). Its function is as follows. Catalyzes the specific phosphorylation of arginine residues in proteins. In Staphylococcus epidermidis (strain ATCC 12228 / FDA PCI 1200), this protein is Protein-arginine kinase.